The chain runs to 24 residues: MTNEEIKRLVDEVKEGVIAXRRHL.

This sequence belongs to the peptidase M20 family. As to quaternary structure, homotetramer. Co(2+) serves as cofactor.

The enzyme catalyses an N-acyl-L-amino acid + H2O = an L-alpha-amino acid + a carboxylate. The catalysed reaction is an N-acetyl-L-cysteine-S-conjugate + H2O = an S-substituted L-cysteine + acetate. This Parageobacillus thermoglucosidasius (Geobacillus thermoglucosidasius) protein is N-acyl-L-amino acid amidohydrolase.